The primary structure comprises 160 residues: Cytochrome b6-f complex subunit 4 (160 aa).

The next 3 helical transmembrane spans lie at 36–56 (LLYT…GLAV), 95–115 (LLGI…PFIE), and 127–147 (PIAM…GVAA).

It belongs to the cytochrome b family. PetD subfamily. The 4 large subunits of the cytochrome b6-f complex are cytochrome b6, subunit IV (17 kDa polypeptide, PetD), cytochrome f and the Rieske protein, while the 4 small subunits are PetG, PetL, PetM and PetN. The complex functions as a dimer.

The protein resides in the cellular thylakoid membrane. Component of the cytochrome b6-f complex, which mediates electron transfer between photosystem II (PSII) and photosystem I (PSI), cyclic electron flow around PSI, and state transitions. The polypeptide is Cytochrome b6-f complex subunit 4 (Prochlorothrix hollandica).